We begin with the raw amino-acid sequence, 96 residues long: Large ribosomal subunit protein bL28 (96 aa).

This sequence belongs to the bacterial ribosomal protein bL28 family.

The sequence is that of Large ribosomal subunit protein bL28 from Agrobacterium fabrum (strain C58 / ATCC 33970) (Agrobacterium tumefaciens (strain C58)).